Reading from the N-terminus, the 360-residue chain is 3-isopropylmalate dehydrogenase (360 aa).

76 to 89 is a binding site for NAD(+); sequence GPKWDTIERDIRPE. Arg-96, Arg-106, Arg-134, and Asp-224 together coordinate substrate. Mg(2+)-binding residues include Asp-224, Asp-248, and Asp-252. Residue 282–294 participates in NAD(+) binding; the sequence is GSAPDIAGKGIAN.

Belongs to the isocitrate and isopropylmalate dehydrogenases family. LeuB type 1 subfamily. Homodimer. It depends on Mg(2+) as a cofactor. Requires Mn(2+) as cofactor.

The protein localises to the cytoplasm. It carries out the reaction (2R,3S)-3-isopropylmalate + NAD(+) = 4-methyl-2-oxopentanoate + CO2 + NADH. The protein operates within amino-acid biosynthesis; L-leucine biosynthesis; L-leucine from 3-methyl-2-oxobutanoate: step 3/4. Its function is as follows. Catalyzes the oxidation of 3-carboxy-2-hydroxy-4-methylpentanoate (3-isopropylmalate) to 3-carboxy-4-methyl-2-oxopentanoate. The product decarboxylates to 4-methyl-2 oxopentanoate. This is 3-isopropylmalate dehydrogenase from Pseudomonas fluorescens (strain Pf0-1).